Consider the following 328-residue polypeptide: DNA polymerase III subunit delta' (328 aa).

DNA polymerase III contains a core (composed of alpha, epsilon and theta chains) that associates with a tau subunit. This core dimerizes to form the POLIII' complex. PolIII' associates with the gamma complex (composed of gamma, delta, delta', psi and chi chains) and with the beta chain to form the complete DNA polymerase III complex.

The catalysed reaction is DNA(n) + a 2'-deoxyribonucleoside 5'-triphosphate = DNA(n+1) + diphosphate. DNA polymerase III is a complex, multichain enzyme responsible for most of the replicative synthesis in bacteria. This DNA polymerase also exhibits 3' to 5' exonuclease activity. The chain is DNA polymerase III subunit delta' (holB) from Buchnera aphidicola subsp. Schizaphis graminum (strain Sg).